Reading from the N-terminus, the 420-residue chain is Exodeoxyribonuclease 7 large subunit (420 aa).

Belongs to the XseA family. Heterooligomer composed of large and small subunits.

It is found in the cytoplasm. It carries out the reaction Exonucleolytic cleavage in either 5'- to 3'- or 3'- to 5'-direction to yield nucleoside 5'-phosphates.. Bidirectionally degrades single-stranded DNA into large acid-insoluble oligonucleotides, which are then degraded further into small acid-soluble oligonucleotides. This is Exodeoxyribonuclease 7 large subunit from Helicobacter pylori (strain Shi470).